The primary structure comprises 880 residues: Leucine--tRNA ligase (880 aa).

The 'HIGH' region signature appears at 46-56 (PYPSGALHMGH). A 'KMSKS' region motif is present at residues 638 to 642 (KMSKS). ATP is bound at residue lysine 641.

It belongs to the class-I aminoacyl-tRNA synthetase family.

The protein localises to the cytoplasm. It catalyses the reaction tRNA(Leu) + L-leucine + ATP = L-leucyl-tRNA(Leu) + AMP + diphosphate. This chain is Leucine--tRNA ligase, found in Xanthomonas axonopodis pv. citri (strain 306).